A 271-amino-acid polypeptide reads, in one-letter code: 3-methyl-2-oxobutanoate hydroxymethyltransferase (271 aa).

The Mg(2+) site is built by Asp-53 and Asp-92. 3-methyl-2-oxobutanoate contacts are provided by residues 53–54 (DS), Asp-92, and Lys-120. Glu-122 is a Mg(2+) binding site. The active-site Proton acceptor is the Glu-189.

It belongs to the PanB family. In terms of assembly, homodecamer; pentamer of dimers. Mg(2+) serves as cofactor.

It is found in the cytoplasm. It catalyses the reaction 3-methyl-2-oxobutanoate + (6R)-5,10-methylene-5,6,7,8-tetrahydrofolate + H2O = 2-dehydropantoate + (6S)-5,6,7,8-tetrahydrofolate. Its pathway is cofactor biosynthesis; (R)-pantothenate biosynthesis; (R)-pantoate from 3-methyl-2-oxobutanoate: step 1/2. In terms of biological role, catalyzes the reversible reaction in which hydroxymethyl group from 5,10-methylenetetrahydrofolate is transferred onto alpha-ketoisovalerate to form ketopantoate. The polypeptide is 3-methyl-2-oxobutanoate hydroxymethyltransferase (Paraburkholderia xenovorans (strain LB400)).